Here is a 383-residue protein sequence, read N- to C-terminus: G-protein coupled receptor E1 (383 aa).

The next 9 membrane-spanning stretches (helical) occupy residues S13 to A35, L78 to I98, M109 to M129, V160 to A180, I190 to F210, V242 to I262, L279 to L299, L323 to V343, and L351 to S371. C145 and C222 are disulfide-bonded.

It belongs to the G-protein coupled receptor 1 family.

It localises to the host membrane. This is G-protein coupled receptor E1 (E1) from Equine herpesvirus 2 (strain 86/87) (EHV-2).